Here is an 841-residue protein sequence, read N- to C-terminus: Serine/threonine-protein kinase/endoribonuclease IRE1a (841 aa).

The first 30 residues, Met1 to Ala30, serve as a signal peptide directing secretion. Topologically, residues Asp31–Gln323 are lumenal. Residues Asn100, Asn104, Asn119, Asn132, and Asn221 are each glycosylated (N-linked (GlcNAc...) asparagine). Residues Trp324–Ile344 traverse the membrane as a helical segment. Residues Lys345–Ile841 are Cytoplasmic-facing. The tract at residues Ser352–Gln382 is disordered. Residues Phe414–Phe704 form the Protein kinase domain. Residues Ile420–Val428 and Lys442 contribute to the ATP site. Asp570 serves as the catalytic Proton acceptor. A KEN domain is found at Ser707–Cys838.

It belongs to the protein kinase superfamily. Ser/Thr protein kinase family. As to quaternary structure, homodimer; disulfide-linked. Dimer formation is driven by hydrophobic interactions within the N-terminal luminal domains and stabilized by disulfide bridges. Requires Mg(2+) as cofactor. Post-translationally, autophosphorylated. As to expression, ubiquitous. Detected in the vascular bundles of young plants, leaves, roots, seedlings and in the receptacles of flowers and vascular bundles of the petals.

The protein localises to the endoplasmic reticulum membrane. It catalyses the reaction L-seryl-[protein] + ATP = O-phospho-L-seryl-[protein] + ADP + H(+). The enzyme catalyses L-threonyl-[protein] + ATP = O-phospho-L-threonyl-[protein] + ADP + H(+). The kinase domain is activated by trans-autophosphorylation. Kinase activity is required for activation of the endoribonuclease domain. Functionally, senses unfolded proteins in the lumen of the endoplasmic reticulum via its N-terminal domain which leads to enzyme auto-activation. The active endoribonuclease domain splices bZIP60 mRNA to generate a new C-terminus, converting it into a potent unfolded-protein response transcriptional activator which then induces transcription of UPR target genes. Involved in organ growth regulation. Plays a role in plant immunity and abiotic stress responses. This is Serine/threonine-protein kinase/endoribonuclease IRE1a (IRE1A) from Arabidopsis thaliana (Mouse-ear cress).